Consider the following 545-residue polypeptide: DnaJ homolog subfamily C member 21 (545 aa).

Residues 3-69 (CHYEVLGVKR…QERAWYDNHR (67 aa)) form the J domain. 4 disordered regions span residues 122–141 (EKEH…SFGE), 276–302 (EYGQ…IANV), 331–497 (SFKS…KEVN), and 522–545 (HATA…RKNR). 2 stretches are compositionally biased toward acidic residues: residues 129-141 (EEDE…SFGE) and 283-295 (DASD…EELE). Positions 180-286 (RWEKRAMEKE…YGQEFGDASD (107 aa)) form a coiled coil. A C2H2-type 1 zinc finger spans residues 323–347 (LYCPACDKSFKSDKAMKNHSKSKKH). Basic residues predominate over residues 339-348 (KNHSKSKKHR). Residues 372–388 (REEDDEEEDDDDDDEQN) show a composition bias toward acidic residues. Positions 394–406 (KLSKRQKKKKRLQ) are enriched in basic residues. The segment at 498–522 (LRCVTCQYEFTTRNKLFDHLKSTGH) adopts a C2H2-type 2 zinc-finger fold. Residues 535-545 (SKKKKDSRKNR) show a composition bias toward basic residues.

May act as a co-chaperone for HSP70. This Danio rerio (Zebrafish) protein is DnaJ homolog subfamily C member 21 (dnajc21).